The primary structure comprises 304 residues: Phosphatidylserine decarboxylase proenzyme (304 aa).

Catalysis depends on charge relay system; for autoendoproteolytic cleavage activity residues aspartate 90, histidine 147, and serine 253. Residue serine 253 is the Schiff-base intermediate with substrate; via pyruvic acid; for decarboxylase activity of the active site. Serine 253 carries the post-translational modification Pyruvic acid (Ser); by autocatalysis.

The protein belongs to the phosphatidylserine decarboxylase family. PSD-B subfamily. Prokaryotic type I sub-subfamily. In terms of assembly, heterodimer of a large membrane-associated beta subunit and a small pyruvoyl-containing alpha subunit. Pyruvate serves as cofactor. In terms of processing, is synthesized initially as an inactive proenzyme. Formation of the active enzyme involves a self-maturation process in which the active site pyruvoyl group is generated from an internal serine residue via an autocatalytic post-translational modification. Two non-identical subunits are generated from the proenzyme in this reaction, and the pyruvate is formed at the N-terminus of the alpha chain, which is derived from the carboxyl end of the proenzyme. The autoendoproteolytic cleavage occurs by a canonical serine protease mechanism, in which the side chain hydroxyl group of the serine supplies its oxygen atom to form the C-terminus of the beta chain, while the remainder of the serine residue undergoes an oxidative deamination to produce ammonia and the pyruvoyl prosthetic group on the alpha chain. During this reaction, the Ser that is part of the protease active site of the proenzyme becomes the pyruvoyl prosthetic group, which constitutes an essential element of the active site of the mature decarboxylase.

It localises to the cell membrane. The catalysed reaction is a 1,2-diacyl-sn-glycero-3-phospho-L-serine + H(+) = a 1,2-diacyl-sn-glycero-3-phosphoethanolamine + CO2. The protein operates within phospholipid metabolism; phosphatidylethanolamine biosynthesis; phosphatidylethanolamine from CDP-diacylglycerol: step 2/2. Its function is as follows. Catalyzes the formation of phosphatidylethanolamine (PtdEtn) from phosphatidylserine (PtdSer). This Dickeya dadantii (strain 3937) (Erwinia chrysanthemi (strain 3937)) protein is Phosphatidylserine decarboxylase proenzyme.